The sequence spans 157 residues: Phosphopantetheine adenylyltransferase (157 aa).

Residue S9 coordinates substrate. Residues 9-10 (SF) and H17 each bind ATP. Residues K41, L73, and K87 each coordinate substrate. ATP contacts are provided by residues 88 to 90 (GLR), E98, and 123 to 129 (YSYLSSS).

The protein belongs to the bacterial CoaD family. Homohexamer. Mg(2+) serves as cofactor.

The protein resides in the cytoplasm. It carries out the reaction (R)-4'-phosphopantetheine + ATP + H(+) = 3'-dephospho-CoA + diphosphate. It functions in the pathway cofactor biosynthesis; coenzyme A biosynthesis; CoA from (R)-pantothenate: step 4/5. Its function is as follows. Reversibly transfers an adenylyl group from ATP to 4'-phosphopantetheine, yielding dephospho-CoA (dPCoA) and pyrophosphate. The polypeptide is Phosphopantetheine adenylyltransferase (Alkaliphilus metalliredigens (strain QYMF)).